Here is a 348-residue protein sequence, read N- to C-terminus: Probable protein phosphatase 2C 35 (348 aa).

Low complexity predominate over residues 11–24; that stretch reads RYPSSSSDGDSRGP. The disordered stretch occupies residues 11–40; it reads RYPSSSSDGDSRGPLEANGVLKGKDQKPLG. Positions 52–342 constitute a PPM-type phosphatase domain; sequence VYSVLSQRGY…DDITIIIVQI (291 aa). Aspartate 93, glycine 94, aspartate 289, and aspartate 333 together coordinate Mn(2+).

Belongs to the PP2C family. Mg(2+) is required as a cofactor. Requires Mn(2+) as cofactor.

It catalyses the reaction O-phospho-L-seryl-[protein] + H2O = L-seryl-[protein] + phosphate. The enzyme catalyses O-phospho-L-threonyl-[protein] + H2O = L-threonyl-[protein] + phosphate. This is Probable protein phosphatase 2C 35 from Arabidopsis thaliana (Mouse-ear cress).